Reading from the N-terminus, the 599-residue chain is ATP-dependent zinc metalloprotease FtsH 3 (599 aa).

Topologically, residues 1–7 (MKYKKKN) are cytoplasmic. Residues 8–28 (ILFITTIIVIYLAFLFNWLEI) traverse the membrane as a helical segment. Residues 29–128 (GIFKPKGESI…PFSWLLSIFS (100 aa)) lie on the Extracellular side of the membrane. A helical transmembrane segment spans residues 129–149 (ILLNFINVLSSLVFTIYIFLA). Residues 150–599 (IHRESGKLNS…IEQLVVNTKK (450 aa)) are Cytoplasmic-facing. An ATP-binding site is contributed by 214 to 221 (GPPGTGKT). Histidine 436 contributes to the Zn(2+) binding site. The active site involves glutamate 437. Histidine 440 and aspartate 512 together coordinate Zn(2+).

It in the central section; belongs to the AAA ATPase family. The protein in the C-terminal section; belongs to the peptidase M41 family. In terms of assembly, homohexamer. Zn(2+) is required as a cofactor.

It localises to the cell membrane. Its function is as follows. Acts as a processive, ATP-dependent zinc metallopeptidase for both cytoplasmic and membrane proteins. Plays a role in the quality control of integral membrane proteins. The sequence is that of ATP-dependent zinc metalloprotease FtsH 3 from Phytoplasma mali (strain AT).